Here is a 335-residue protein sequence, read N- to C-terminus: Phosphate acyltransferase (335 aa).

The protein belongs to the PlsX family. Homodimer. Probably interacts with PlsY.

Its subcellular location is the cytoplasm. The catalysed reaction is a fatty acyl-[ACP] + phosphate = an acyl phosphate + holo-[ACP]. Its pathway is lipid metabolism; phospholipid metabolism. Its function is as follows. Catalyzes the reversible formation of acyl-phosphate (acyl-PO(4)) from acyl-[acyl-carrier-protein] (acyl-ACP). This enzyme utilizes acyl-ACP as fatty acyl donor, but not acyl-CoA. In Clostridium botulinum (strain Loch Maree / Type A3), this protein is Phosphate acyltransferase.